A 196-amino-acid chain; its full sequence is Recombination protein RecR (196 aa).

The C4-type zinc finger occupies 57 to 72; it reads CERCHTFTEGAVCETC. The Toprim domain occupies 80 to 175; that stretch reads TRLCVVETPA…HVTRLARGVP (96 aa).

Belongs to the RecR family.

In terms of biological role, may play a role in DNA repair. It seems to be involved in an RecBC-independent recombinational process of DNA repair. It may act with RecF and RecO. In Acidovorax sp. (strain JS42), this protein is Recombination protein RecR.